The sequence spans 886 residues: Desmocollin-1 (886 aa).

The signal sequence occupies residues methionine 1–alanine 29. The propeptide occupies cysteine 30–arginine 134. N-linked (GlcNAc...) asparagine glycosylation is found at asparagine 130 and asparagine 165. 5 Cadherin domains span residues arginine 135–phenylalanine 242, glutamate 243–phenylalanine 354, threonine 355–cysteine 471, glutamine 472–proline 575, and glutamine 576–aspartate 682. Topologically, residues arginine 135–lysine 691 are extracellular. Threonine 385 carries the post-translational modification Phosphothreonine. Asparagine 546 carries N-linked (GlcNAc...) (high mannose) asparagine glycosylation. N-linked (GlcNAc...) asparagine glycosylation is present at asparagine 613. The helical transmembrane segment at tryptophan 692 to valine 714 threads the bilayer. Residues threonine 715–lysine 886 are Cytoplasmic-facing.

Binds to JUP/plakoglobin. In terms of tissue distribution, expressed in the epidermis and inner root sheaths of hair follicles (at protein level).

It is found in the cell membrane. The protein resides in the cell junction. Its subcellular location is the desmosome. Its function is as follows. A component of desmosome cell-cell junctions which are required for positive regulation of cellular adhesion. Required for desmosome adhesion strength between the granular layers of the epidermis, as a result moderates epidermal proliferation and differentiation. Is therefore required to maintain postnatal epidermal barrier function and normal hair follicle morphology into adulthood. The chain is Desmocollin-1 (Dsc1) from Mus musculus (Mouse).